A 204-amino-acid chain; its full sequence is ADP-ribosylation factor-like protein 15 (204 aa).

GTP is bound by residues 39–46 (GLTGSGKT), 82–86 (ELGGA), and 142–145 (NHQD).

The protein belongs to the small GTPase superfamily. Arf family.

The sequence is that of ADP-ribosylation factor-like protein 15 (ARL15) from Homo sapiens (Human).